A 1181-amino-acid chain; its full sequence is MTSEQEEVSILTLQVTFPDPELPPLSLTVSPEESVQEIRNYIRDAFVQERCITSFTLNLNGQPIDGFESLAEIEGLESGATIELTNAPYNEHEARLHVIRVRELAGFSNNSHAAVGQDAGMTAFNRTEGIDKTPKDYMQEVVETKAQKEAKAKLKAEQKKAKAAAKAEALAKNEEVSEDEESEPEDDTPMKQSTQVLEENSPMHGFKLEESKSLQELFPDRQNLPAPALLSLHLSHWNPPTQAQQLNGELLYLQCATLEGESYQIVAHTNGFYVANSTLGSFDPSPKPLMVKTKAKKQNGGKKGGKKTETEISYVPITTENMHHSLYDLLVSLSDKFAKKIASNYAELNAAGMLSVVPPTNCFLANPWLTKPAGFRRPDMARNQELLSLKNLEGQDDTREWSEDLQSLKELPRETINDRVVRERHLNKTYFDFTEAAVAGAVQVVHGEIQPINPSEPEASHIFLHKGIFYSVGADGSGTYAEIGGDEAARVASAKDLQAVQQLVQFDFPEIASLCTTVVDYQGKRIVCQSPVPGIFRQPENAPPQVKYGSVEGAEEIASEQEFGDAFKPIAAAFRLKTHTVKDANKEHSLHLASDCKGLAGTDGRKYLLDLYRLAPVDIAFLDANPSYPHQLALLRFEAVEAYFRHQVRAEIKKQSLDEDETPKFEVEPFYLNPDAFVLPAPKEDEDAVRAASEFVSNTIIPEHVEAVIAGFGTTPIDGQQLTQSLHGKGIPMRHLASVIAAAKKSDTSKAQFLAELCEQEIAVRSAKHLLRNEMAKKGANPKYVVAHVMNLLLGSTSKVFDTPAGLLAVSDSVNLSVDEAKAAVAAIAKTRFGYDLDTSIFAKRPVQLLRELSGKLGLQFLQKEYEFGAEPFAVADVVNILPVFKTTTFRSKLVEEALEAARNSVNTDKDVALQLLRESIPLAEQVYGSVNPELTKVYNTASYLAYEMDEALLAADLGRRACIMSERCSGIDSVDAILNYLNLSLFEHAIGNYVGALHMIKHAVSVWVTVCGTHLHPDIITSLSNAITMLTTLKRWNESRQWLEKTIVITESVANEKAQAPLRFQLAQTMCHEQQYKEATDELRRALKLFNAHYGEDDQNTKDCAVWLKSLTQAAVSIQRQKLWEQEQGRLARQAPKPTATHQKEAPKKASKKTKGKGKGKDDKGEKLVAELKKKKAGKR.

Residues 165–195 are disordered; the sequence is AKAEALAKNEEVSEDEESEPEDDTPMKQSTQ. The segment covering 176 to 187 has biased composition (acidic residues); it reads VSEDEESEPEDD. One can recognise a Clu domain in the interval 379 to 622; it reads DMARNQELLS…RLAPVDIAFL (244 aa). Residues 1130–1181 form a disordered region; sequence GRLARQAPKPTATHQKEAPKKASKKTKGKGKGKDDKGEKLVAELKKKKAGKR. A compositionally biased stretch (basic residues) spans 1150-1159; sequence KASKKTKGKG. Residues 1160–1173 are compositionally biased toward basic and acidic residues; the sequence is KGKDDKGEKLVAEL.

The protein belongs to the CLU family. As to quaternary structure, may associate with the eukaryotic translation initiation factor 3 (eIF-3) complex.

Its subcellular location is the cytoplasm. Functionally, mRNA-binding protein involved in proper cytoplasmic distribution of mitochondria. The sequence is that of Clustered mitochondria protein homolog from Yarrowia lipolytica (strain CLIB 122 / E 150) (Yeast).